The chain runs to 167 residues: CASP-like protein UU1 (167 aa).

At 1–17 (MVELESQEAVTVASTAD) the chain is on the cytoplasmic side. A helical membrane pass occupies residues 18–38 (IAVDVSLRLLAAATSLASAVV). Residues 39–54 (VAANHQQRWGVRVDFT) are Extracellular-facing. A helical transmembrane segment spans residues 55 to 75 (LFQVWIGFVAVNLVCTVYAAA). At 76 to 94 (TAAAARKAMGRWWLHHADA) the chain is on the cytoplasmic side. Residues 95 to 115 (VVVNLEAAATAGAGAIGSIAM) traverse the membrane as a helical segment. Over 116–135 (WGNEASGWYAVCRLYRRYCN) the chain is Extracellular. A helical transmembrane segment spans residues 136 to 156 (AGAAALALSLAAVLLLGVACA). Over 157-167 (RSRYPKMPPTT) the chain is Cytoplasmic.

This sequence belongs to the Casparian strip membrane proteins (CASP) family. In terms of assembly, homodimer and heterodimers.

It is found in the cell membrane. This chain is CASP-like protein UU1, found in Oryza sativa subsp. indica (Rice).